The following is a 162-amino-acid chain: MGANRLVAVHIDEETLGASGPDAEHERRVAIFDLIEENTFGVIGEDRGPYVLALSQHERRLVFAIRTEPGEEVHTFILSLSPFRGVIRDYFTICDSYYEAIRMSTPHQIEAIDMARRGIHNEGSELLKERLEGKIDIDFHTARRLFTLICALHAGQGRAPGA.

The protein belongs to the UPF0262 family.

The polypeptide is UPF0262 protein HNE_1347 (Hyphomonas neptunium (strain ATCC 15444)).